A 677-amino-acid chain; its full sequence is Electrogenic aspartate/glutamate antiporter SLC25A12, mitochondrial (677 aa).

N-acetylalanine is present on Ala2. The regulatory N-terminal domain stretch occupies residues Ala2 to Pro294. Residues Ala2–Arg329 lie on the Mitochondrial intermembrane side of the membrane. 4 consecutive EF-hand domains span residues Val40 to Cys85, Ala86 to His121, His122 to Glu156, and Leu157 to His192. Ca(2+) contacts are provided by Asp65, Thr67, Asp69, Leu71, and Glu76. Residues Leu295 to Gln310 form a linker loop domain region. The interval Trp320 to Leu612 is carrier domain. Solcar repeat units lie at residues Ala324–Lys416, Ile424–Leu508, and Val516–Trp604. Residues Phe330–Ile347 traverse the membrane as a helical segment. At Asp348–Arg390 the chain is on the mitochondrial matrix side. The chain crosses the membrane as a helical span at residues Gly391 to Asn410. Residues Asp411–Gly433 are Mitochondrial intermembrane-facing. Residues Gly434–Leu447 traverse the membrane as a helical segment. Over Glu448–Lys482 the chain is Mitochondrial matrix. Residues Gly483 to Tyr502 form a helical membrane-spanning segment. Residues Ala503–Leu521 lie on the Mitochondrial intermembrane side of the membrane. The chain crosses the membrane as a helical span at residues Leu522–Ala539. At Asp540–Lys578 the chain is on the mitochondrial matrix side. The chain crosses the membrane as a helical span at residues Gly579–Tyr598. Over Glu599–Gln677 the chain is Mitochondrial intermembrane. The C-terminal domain stretch occupies residues Lys613–Gln677.

This sequence belongs to the mitochondrial carrier (TC 2.A.29) family. As to quaternary structure, homodimer (via N-terminus).

It localises to the mitochondrion inner membrane. The enzyme catalyses L-aspartate(in) + L-glutamate(out) + H(+)(out) = L-aspartate(out) + L-glutamate(in) + H(+)(in). The catalysed reaction is 3-sulfino-L-alanine(out) + L-glutamate(in) + H(+)(in) = 3-sulfino-L-alanine(in) + L-glutamate(out) + H(+)(out). It carries out the reaction 3-sulfino-L-alanine(out) + L-aspartate(in) = 3-sulfino-L-alanine(in) + L-aspartate(out). In terms of biological role, mitochondrial electrogenic aspartate/glutamate antiporter that favors efflux of aspartate and entry of glutamate and proton within the mitochondria as part of the malate-aspartate shuttle. Also mediates the uptake of L-cysteinesulfinate (3-sulfino-L-alanine) by mitochondria in exchange of L-glutamate and proton. Can also exchange L-cysteinesulfinate with aspartate in their anionic form without any proton translocation. Lacks transport activity towards L-glutamine or gamma-aminobutyric acid (GABA). This Mus musculus (Mouse) protein is Electrogenic aspartate/glutamate antiporter SLC25A12, mitochondrial.